An 862-amino-acid chain; its full sequence is Valine--tRNA ligase (862 aa).

Positions 47-57 (PTASGSLHIGH) match the 'HIGH' region motif. The disordered stretch occupies residues 110–130 (EPGLTPPFEGGDNKSSKAADQ). The span at 120 to 129 (GDNKSSKAAD) shows a compositional bias: basic and acidic residues. A 'KMSKS' region motif is present at residues 584–588 (KMSKS). An ATP-binding site is contributed by lysine 587.

This sequence belongs to the class-I aminoacyl-tRNA synthetase family. ValS type 2 subfamily. Monomer.

It localises to the cytoplasm. The catalysed reaction is tRNA(Val) + L-valine + ATP = L-valyl-tRNA(Val) + AMP + diphosphate. In terms of biological role, catalyzes the attachment of valine to tRNA(Val). As ValRS can inadvertently accommodate and process structurally similar amino acids such as threonine, to avoid such errors, it has a 'posttransfer' editing activity that hydrolyzes mischarged Thr-tRNA(Val) in a tRNA-dependent manner. In Leifsonia xyli subsp. xyli (strain CTCB07), this protein is Valine--tRNA ligase.